A 353-amino-acid chain; its full sequence is Quinolinate synthase (353 aa).

The iminosuccinate site is built by histidine 47 and serine 68. Cysteine 113 provides a ligand contact to [4Fe-4S] cluster. Residues tyrosine 139–asparagine 141 and serine 156 contribute to the iminosuccinate site. Cysteine 200 is a binding site for [4Fe-4S] cluster. Residues histidine 226–glutamate 228 and threonine 243 contribute to the iminosuccinate site. Cysteine 297 contacts [4Fe-4S] cluster.

It belongs to the quinolinate synthase family. Type 1 subfamily. Requires [4Fe-4S] cluster as cofactor.

Its subcellular location is the cytoplasm. The enzyme catalyses iminosuccinate + dihydroxyacetone phosphate = quinolinate + phosphate + 2 H2O + H(+). The protein operates within cofactor biosynthesis; NAD(+) biosynthesis; quinolinate from iminoaspartate: step 1/1. In terms of biological role, catalyzes the condensation of iminoaspartate with dihydroxyacetone phosphate to form quinolinate. In Yersinia pseudotuberculosis serotype O:3 (strain YPIII), this protein is Quinolinate synthase.